The sequence spans 535 residues: Beta-glucosidase 47 (535 aa).

The first 38 residues, 1–38 (MKKSIVYEIMETKSSMYLSQFRLWLCFIITTLVSLSSS), serve as a signal peptide directing secretion. An a beta-D-glucoside-binding site is contributed by Gln73. N-linked (GlcNAc...) asparagine glycosylation is present at Asn93. A beta-D-glucoside-binding positions include His175 and 220-221 (NE). Residue Glu221 is the Proton donor of the active site. An intrachain disulfide couples Cys240 to Cys247. N-linked (GlcNAc...) asparagine glycosylation occurs at Asn246. Residue Tyr363 coordinates a beta-D-glucoside. Residues Cys371 and Cys376 are joined by a disulfide bond. Residue Asn419 is glycosylated (N-linked (GlcNAc...) asparagine). An a beta-D-glucoside-binding site is contributed by Glu426. Residue Glu426 is the Nucleophile of the active site. Asn432 carries an N-linked (GlcNAc...) asparagine glycan. A beta-D-glucoside-binding positions include Trp470, 477–478 (EW), and Phe486.

This sequence belongs to the glycosyl hydrolase 1 family.

It catalyses the reaction Hydrolysis of terminal, non-reducing beta-D-glucosyl residues with release of beta-D-glucose.. This chain is Beta-glucosidase 47, found in Arabidopsis thaliana (Mouse-ear cress).